A 483-amino-acid chain; its full sequence is General transcription factor IIH subunit 4 (483 aa).

Positions 93 to 117 (PQQQQSSQQSSSQQQQQQQQQQQQT) are disordered. Positions 94–116 (QQQQSSQQSSSQQQQQQQQQQQQ) are enriched in low complexity.

It belongs to the TFB2 family. As to quaternary structure, component of the 7-subunit TFIIH core complex composed of XPB/repB, XPD/repD, gtf2h1, gtf2h2, gtf2h3, gtf2h4 and gtf2h5, which is active in NER. The core complex associates with the 3-subunit CDK-activating kinase (CAK) module composed of cycH/cyclin H, cdk7 and mnat1 to form the 10-subunit holoenzyme (holo-TFIIH) active in transcription.

The protein resides in the nucleus. In terms of biological role, component of the general transcription and DNA repair factor IIH (TFIIH) core complex, which is involved in general and transcription-coupled nucleotide excision repair (NER) of damaged DNA and, when complexed to CAK, in RNA transcription by RNA polymerase II. In NER, TFIIH acts by opening DNA around the lesion to allow the excision of the damaged oligonucleotide and its replacement by a new DNA fragment. In transcription, TFIIH has an essential role in transcription initiation. When the pre-initiation complex (PIC) has been established, TFIIH is required for promoter opening and promoter escape. Phosphorylation of the C-terminal tail (CTD) of the largest subunit of RNA polymerase II by the kinase module CAK controls the initiation of transcription. The polypeptide is General transcription factor IIH subunit 4 (gtf2h4) (Dictyostelium discoideum (Social amoeba)).